Consider the following 509-residue polypeptide: Leucine-rich repeat-containing protein 14 (509 aa).

An LRR 1; degenerate repeat occupies 111–146; the sequence is RQRLRLLDMTGMQEEGLEQNPDTMSLWSRTVTLAKA. The stretch at 210–234 is one LRR 2; degenerate repeat; the sequence is RLQCRDFRAEELSLRSTAGLLELLN. One copy of the LRR 3; degenerate repeat lies at 235 to 262; it reads PGSVRQIDLRFNNLGLSGLNVLLPHMAK. The stretch at 263-298 is one LRR 4; degenerate repeat; it reads FSHLQSLKLPYSNVDVRRLSPVMEEGLQSFASQLGQ. LRR repeat units lie at residues 299-323, 324-355, 356-374, 380-407, and 408-432; these read LGAL…LGGL, QRPL…SSLR, KLDL…PFLH, SGHL…ILCR, and CSWL…VLQN.

This sequence belongs to the PRAME family. LRRC14 subfamily.

It is found in the cytoplasm. In Xenopus laevis (African clawed frog), this protein is Leucine-rich repeat-containing protein 14.